A 248-amino-acid chain; its full sequence is MNSLLVNKAAIVTGGSRGIGFGIAKLFAEHGANVQIWGINEEAGKSAAQDLSDKTGSKVSFALVDVSKNDMVSAQVQKFLAEYGTIDVVVNNAGITRDSLLMRMSEEEWSSVIDTNLGSIYNVCSAVIRPMIKARSGAIVNISSIVGLRGSPGQTNYAAAKAGIIGFSKALSKEVGSKNIRVNCIAPGFIDTDMTKGLSDNLKNEWLKGVPLGRVGTPEEIAMAALFLASNQSSYITGQVLSVDGGMA.

Residues 14-17, 65-66, and asparagine 92 each bind NADP(+); these read GGSR and DV. Substrate is bound at residue serine 144. Catalysis depends on tyrosine 157, which acts as the Proton acceptor. NADP(+)-binding positions include 157 to 161 and isoleucine 190; that span reads YAAAK.

This sequence belongs to the short-chain dehydrogenases/reductases (SDR) family. Homotetramer.

It catalyses the reaction a (3R)-hydroxyacyl-[ACP] + NADP(+) = a 3-oxoacyl-[ACP] + NADPH + H(+). The protein operates within lipid metabolism; fatty acid biosynthesis. Its function is as follows. Catalyzes the NADPH-dependent reduction of beta-ketoacyl-ACP substrates to beta-hydroxyacyl-ACP products, the first reductive step in the elongation cycle of fatty acid biosynthesis. The protein is 3-oxoacyl-[acyl-carrier-protein] reductase FabG (fabG) of Chlamydia muridarum (strain MoPn / Nigg).